A 260-amino-acid chain; its full sequence is Tryptophan synthase alpha chain (260 aa).

Catalysis depends on proton acceptor residues Glu-52 and Asp-63.

This sequence belongs to the TrpA family. In terms of assembly, tetramer of two alpha and two beta chains.

The enzyme catalyses (1S,2R)-1-C-(indol-3-yl)glycerol 3-phosphate + L-serine = D-glyceraldehyde 3-phosphate + L-tryptophan + H2O. The protein operates within amino-acid biosynthesis; L-tryptophan biosynthesis; L-tryptophan from chorismate: step 5/5. Functionally, the alpha subunit is responsible for the aldol cleavage of indoleglycerol phosphate to indole and glyceraldehyde 3-phosphate. The chain is Tryptophan synthase alpha chain from Streptococcus thermophilus (strain ATCC BAA-491 / LMD-9).